We begin with the raw amino-acid sequence, 417 residues long: NADH-quinone oxidoreductase subunit D (417 aa).

Belongs to the complex I 49 kDa subunit family. As to quaternary structure, NDH-1 is composed of 14 different subunits. Subunits NuoB, C, D, E, F, and G constitute the peripheral sector of the complex.

Its subcellular location is the cell inner membrane. The catalysed reaction is a quinone + NADH + 5 H(+)(in) = a quinol + NAD(+) + 4 H(+)(out). In terms of biological role, NDH-1 shuttles electrons from NADH, via FMN and iron-sulfur (Fe-S) centers, to quinones in the respiratory chain. The immediate electron acceptor for the enzyme in this species is believed to be ubiquinone. Couples the redox reaction to proton translocation (for every two electrons transferred, four hydrogen ions are translocated across the cytoplasmic membrane), and thus conserves the redox energy in a proton gradient. In Coxiella burnetii (strain Dugway 5J108-111), this protein is NADH-quinone oxidoreductase subunit D.